The chain runs to 365 residues: Chorismate synthase (365 aa).

2 residues coordinate NADP(+): R48 and R54. Residues 131-133, 243-244, G288, 303-307, and R329 each bind FMN; these read RSS, NA, and KPTSS.

This sequence belongs to the chorismate synthase family. As to quaternary structure, homotetramer. FMNH2 is required as a cofactor.

It catalyses the reaction 5-O-(1-carboxyvinyl)-3-phosphoshikimate = chorismate + phosphate. It functions in the pathway metabolic intermediate biosynthesis; chorismate biosynthesis; chorismate from D-erythrose 4-phosphate and phosphoenolpyruvate: step 7/7. Catalyzes the anti-1,4-elimination of the C-3 phosphate and the C-6 proR hydrogen from 5-enolpyruvylshikimate-3-phosphate (EPSP) to yield chorismate, which is the branch point compound that serves as the starting substrate for the three terminal pathways of aromatic amino acid biosynthesis. This reaction introduces a second double bond into the aromatic ring system. The chain is Chorismate synthase from Sinorhizobium medicae (strain WSM419) (Ensifer medicae).